The sequence spans 248 residues: 4-hydroxy-tetrahydrodipicolinate reductase (248 aa).

Residues Gly9–Val14, Gly77–Thr79, and Ala104–Phe107 each bind NAD(+). His134 serves as the catalytic Proton donor/acceptor. A (S)-2,3,4,5-tetrahydrodipicolinate-binding site is contributed by His135. Lys138 serves as the catalytic Proton donor. Residue Gly144–Thr145 coordinates (S)-2,3,4,5-tetrahydrodipicolinate.

Belongs to the DapB family.

The protein localises to the cytoplasm. The enzyme catalyses (S)-2,3,4,5-tetrahydrodipicolinate + NAD(+) + H2O = (2S,4S)-4-hydroxy-2,3,4,5-tetrahydrodipicolinate + NADH + H(+). It carries out the reaction (S)-2,3,4,5-tetrahydrodipicolinate + NADP(+) + H2O = (2S,4S)-4-hydroxy-2,3,4,5-tetrahydrodipicolinate + NADPH + H(+). It functions in the pathway amino-acid biosynthesis; L-lysine biosynthesis via DAP pathway; (S)-tetrahydrodipicolinate from L-aspartate: step 4/4. In terms of biological role, catalyzes the conversion of 4-hydroxy-tetrahydrodipicolinate (HTPA) to tetrahydrodipicolinate. In Corynebacterium efficiens (strain DSM 44549 / YS-314 / AJ 12310 / JCM 11189 / NBRC 100395), this protein is 4-hydroxy-tetrahydrodipicolinate reductase.